A 56-amino-acid chain; its full sequence is Small integral membrane protein 39 (56 aa).

The helical transmembrane segment at 33 to 53 threads the bilayer; it reads VVVSAVLALLVLINVVLIFLL.

Its subcellular location is the membrane. This chain is Small integral membrane protein 39, found in Homo sapiens (Human).